The primary structure comprises 125 residues: Small ribosomal subunit protein mS41 (125 aa).

A mitochondrion-targeting transit peptide spans 1–10 (MLSIFGCVRA). The segment at 103 to 125 (SFFGGERNRKATVAKWRAEQRNK) is disordered.

It belongs to the mitochondrion-specific ribosomal protein mS41 family.

The protein localises to the mitochondrion. In terms of biological role, involved in telomere length regulation. The polypeptide is Small ribosomal subunit protein mS41 (FYV4) (Candida glabrata (strain ATCC 2001 / BCRC 20586 / JCM 3761 / NBRC 0622 / NRRL Y-65 / CBS 138) (Yeast)).